Consider the following 23-residue polypeptide: Thymidine phosphorylase (23 aa).

Belongs to the thymidine/pyrimidine-nucleoside phosphorylase family. As to quaternary structure, homodimer.

It catalyses the reaction thymidine + phosphate = 2-deoxy-alpha-D-ribose 1-phosphate + thymine. In terms of biological role, the enzymes which catalyze the reversible phosphorolysis of pyrimidine nucleosides are involved in the degradation of these compounds and in their utilization as carbon and energy sources, or in the rescue of pyrimidine bases for nucleotide synthesis. The sequence is that of Thymidine phosphorylase (deoA) from Lacticaseibacillus rhamnosus (Lactobacillus rhamnosus).